The primary structure comprises 586 residues: Alanine racemase ungC (586 aa).

The disordered stretch occupies residues R187 to P206. A compositionally biased stretch (polar residues) spans S196 to P206.

The protein belongs to the trans-sulfuration enzymes family. The cofactor is pyridoxal 5'-phosphate.

It carries out the reaction L-alanine = D-alanine. Its pathway is secondary metabolite biosynthesis. In terms of biological role, alanine racemase; part of the gene cluster that mediates the biosynthesis of the unguisins, gamma-aminobutyric acid (GABA)-containing fungal cyclic heptapeptides with the amino acid sequence cyclo-(D-Ala1-D-Val2-L-Phe3-D-Val4-D-Ala5-D-Trp6-GABA7) for unguisin A and cyclo-(D-Ala1-D-Val2-L-Leu3-D-Val4-D-Ala5-D-Trp6-GABA7) for unguisin B. Within the pathway, the alanine racemase ungC catalyzes the interconversion of L-alanine and D-alanine, providing the D-alanine which is accepted by the first adenylation domain of the nonribosomal peptide synthetase (NRPS) ungA. UngA is the main enzyme within the cluster which condenses the 7 residues using its respective 7 modules. The terminal condensation domain (Ct) is involved in cyclization with D-alanine and thereby releasing of unguisins A and B. Finally, the hydrolase ungD catalyzes the hydrolysis between the D-tryptophan and GABA residues of unguisins A and B to produce the corresponding linear peptides. The sequence is that of Alanine racemase ungC from Aspergillus violaceofuscus (strain CBS 115571).